The primary structure comprises 841 residues: MPLRRFSPGLKAQFAFGMVFLFVQPDASAADISAQQIGGVIIPQAFSQALQDGMSVPLYIHLAGSQGRQDDQRIGSAFIWLDDGQLRIRKIQLEESEDNASVSEQTRQQLMALANAPFNEALTIPLTDNAQLDLSLRQLLLQLVVKREALGTVLRSRSEDIGQSSVNTLSSNLSYNFGIYNNQLRNGGSNTSSYLSLNNVTALREHHVVLDGSLYGIGSGQQDSELYKAMYERDFAGHRFAGGTLDTWNLQSLGPMTAISAGKIYGLSWGNQASSTIFDSSQSATPVIAFLPAAGEVHLTRDGRLLSVQNFTMGNHEVDTRGLPYGIYDVEVEVIVNGRVISKRTQRVNKLFSRGRGVGAPLAWQVWGGSFHMDRWSENGKKTRPAKESWLAGASTSGSLSTLSWAATGYGYDNQAVGETRLTLPLGGAINVNLQNMLASDSSWSSIGSISATLPGGFSSLWVNQEKTRIGNQLRRSDADNRAIGGTLNLNSLWSKLGTFSISYNDDRRYNSHYYTADYYQNVYSGTFGSLGLRAGIQRYNNGDSNANTGKYIALDLSLPLGNWFSAGMTHQNGYTMANLSARKQFDEGTIRTVGANLSRAISGDTGDDKTLSGGAYAQFDARYASGTLNVNSAADGYVNTNLTANGSVGWQGKNIAASGRTDGNAGVIFNTGLEDDGQISAKINGRIFPLNGKRNYLPLSPYGRYEVELQNSKNSLDSYDIVSGRKSHLTLYPGNVAVIEPEVKQMVTVSGRIRAEDGTLLANARINNHIGRTRTDENGEFVMDVDKKYPTIDFRYSGNKTCEVALELNQARGAVWVGDVVCSGLSSWAAVTQTGEENES.

The N-terminal stretch at 1 to 29 is a signal peptide; sequence MPLRRFSPGLKAQFAFGMVFLFVQPDASA.

This sequence belongs to the EcpC/MatD family.

In terms of biological role, part of the ecpRABCDE operon, which encodes the E.coli common pilus (ECP). ECP is found in both commensal and pathogenic strains and plays a dual role in early-stage biofilm development and host cell recognition. The chain is Probable outer membrane usher protein EcpC (ecpC) from Escherichia coli O157:H7.